The following is a 274-amino-acid chain: 2,3,4,5-tetrahydropyridine-2,6-dicarboxylate N-succinyltransferase (274 aa).

Substrate-binding residues include Arg107 and Asp144.

This sequence belongs to the transferase hexapeptide repeat family. Homotrimer.

It is found in the cytoplasm. It catalyses the reaction (S)-2,3,4,5-tetrahydrodipicolinate + succinyl-CoA + H2O = (S)-2-succinylamino-6-oxoheptanedioate + CoA. It functions in the pathway amino-acid biosynthesis; L-lysine biosynthesis via DAP pathway; LL-2,6-diaminopimelate from (S)-tetrahydrodipicolinate (succinylase route): step 1/3. The polypeptide is 2,3,4,5-tetrahydropyridine-2,6-dicarboxylate N-succinyltransferase (Cereibacter sphaeroides (strain ATCC 17029 / ATH 2.4.9) (Rhodobacter sphaeroides)).